The primary structure comprises 336 residues: Ferrochelatase (336 aa).

The Fe cation site is built by histidine 206 and glutamate 287.

This sequence belongs to the ferrochelatase family.

Its subcellular location is the cytoplasm. It carries out the reaction heme b + 2 H(+) = protoporphyrin IX + Fe(2+). The protein operates within porphyrin-containing compound metabolism; protoheme biosynthesis; protoheme from protoporphyrin-IX: step 1/1. Catalyzes the ferrous insertion into protoporphyrin IX. In Neisseria meningitidis serogroup A / serotype 4A (strain DSM 15465 / Z2491), this protein is Ferrochelatase.